The chain runs to 510 residues: Inner membrane protein YeeR (510 aa).

A topological domain (cytoplasmic) is located at residue methionine 1. Residues 2-22 (LQIVGALILLIAGFAILRLLF) traverse the membrane as a helical segment. Residues 23 to 30 (RALISTAS) are Periplasmic-facing. A helical membrane pass occupies residues 31–51 (ALAGLILLCLFGPALLAGYIT). Over 52–61 (ERITRLFHIR) the chain is Cytoplasmic. The helical transmembrane segment at 62-82 (WLAGVFLTIAGMIISFMWGLD) threads the bilayer. The Periplasmic segment spans residues 83-94 (GKHIALEAHTFD). Residues 95–115 (SVKFILTTALAGGLLAVPLQI) form a helical membrane-spanning segment. Over 116 to 136 (KNIQQNGITPEDISKEINGYY) the chain is Cytoplasmic. Residues 137-157 (CCFYTAFFLMACSACAPLIAL) form a helical membrane-spanning segment. Residues 158 to 164 (QYDISPS) lie on the Periplasmic side of the membrane. A helical membrane pass occupies residues 165-185 (LMWWGGLLYWLAALVTLLWAA). At 186–510 (SQIQALKKLT…KIREGKVEER (325 aa)) the chain is on the cytoplasmic side.

The protein localises to the cell inner membrane. The polypeptide is Inner membrane protein YeeR (yeeR) (Escherichia coli (strain K12)).